Reading from the N-terminus, the 882-residue chain is Formin-like protein 9 (882 aa).

The signal sequence occupies residues 1–19 (MGMAMRCVLVLFSVSPVLL). The disordered stretch occupies residues 67-92 (SRGRRHKRYSEAPAPAPAPVPAHQAR). Residues 138 to 158 (IVALGVVGLCLVVLGVVIAAF) traverse the membrane as a helical segment. Disordered regions lie at residues 178–202 (RHGS…PDPL), 293–316 (THDS…LSPK), and 401–471 (TMTN…PLPR). Over residues 298–308 (SDSSYQSLSPD) the composition is skewed to low complexity. Over residues 427–441 (KPAPPPPPQKNPPPN) the composition is skewed to pro residues. Residues 462 to 882 (VGKDGSPLPR…QTLNLVLPLK (421 aa)) form the FH2 domain.

Belongs to the formin-like family. Class-I subfamily.

It is found in the membrane. This is Formin-like protein 9 (FH9) from Oryza sativa subsp. japonica (Rice).